A 68-amino-acid polypeptide reads, in one-letter code: Conotoxin phi-MiXXVIIB (68 aa).

Residues 1–29 (MRFFFLLLTVALFLTSITGDDAERMLGMK) form the signal peptide. Positions 30–35 (EGGYVR) are excised as a propeptide. Cystine bridges form between Cys-38-Cys-49, Cys-42-Cys-51, Cys-45-Cys-56, and Cys-50-Cys-61. Pro-44 is subject to 4-hydroxyproline.

Belongs to the conotoxin G2 superfamily. 1 family. As to expression, expressed by the venom duct.

The protein localises to the secreted. Functionally, this peptide promotes cell proliferation (EC(50)=17.85 uM) and inhibits apoptosis (EC(50)=2.2 uM). This is Conotoxin phi-MiXXVIIB from Conus miles (Soldier cone).